Here is a 266-residue protein sequence, read N- to C-terminus: Probable septum site-determining protein MinC (266 aa).

The disordered stretch occupies residues 98–146; it reads ILKGGRPVSDVDVPKVEPESPPAEEKKKTGKATKASGKSDEIGETDSPQ. The segment covering 109–124 has biased composition (basic and acidic residues); sequence DVPKVEPESPPAEEKK.

Belongs to the MinC family. Interacts with MinD and FtsZ.

Its function is as follows. Cell division inhibitor that blocks the formation of polar Z ring septums. Rapidly oscillates between the poles of the cell to destabilize FtsZ filaments that have formed before they mature into polar Z rings. Prevents FtsZ polymerization. The protein is Probable septum site-determining protein MinC of Allorhizobium ampelinum (strain ATCC BAA-846 / DSM 112012 / S4) (Agrobacterium vitis (strain S4)).